A 547-amino-acid chain; its full sequence is Oncoprotein-induced transcript 3 protein (547 aa).

The first 19 residues, 1–19 (MPQLLLLACLLIIVTRVAP), serve as a signal peptide directing secretion. N-linked (GlcNAc...) asparagine glycosylation is found at N89 and N116. Residues 182–222 (DENECEQNNGGCSEICVNLKNSYRCECGIGRVLRSDGKTCE) enclose the EGF-like; calcium-binding domain. Disulfide bonds link C186-C197, C193-C206, and C208-C221. Residues 267 to 516 (FCKSNTIEVS…SRCAQGCHRR (250 aa)) form the ZP domain. N299 is a glycosylation site (N-linked (GlcNAc...) asparagine). A disordered region spans residues 520–547 (EASTEGEDASGPRSQMLTGGPISIDWED).

Its subcellular location is the nucleus envelope. In terms of biological role, may be involved in hepatocellular function and development. In Bos taurus (Bovine), this protein is Oncoprotein-induced transcript 3 protein (OIT3).